A 161-amino-acid polypeptide reads, in one-letter code: Transcription elongation factor GreA (161 aa).

A coiled-coil region spans residues 43–68 (SENAEYEAAREKQAFVEARIKHLEDI).

The protein belongs to the GreA/GreB family.

Necessary for efficient RNA polymerase transcription elongation past template-encoded arresting sites. The arresting sites in DNA have the property of trapping a certain fraction of elongating RNA polymerases that pass through, resulting in locked ternary complexes. Cleavage of the nascent transcript by cleavage factors such as GreA or GreB allows the resumption of elongation from the new 3'terminus. GreA releases sequences of 2 to 3 nucleotides. The chain is Transcription elongation factor GreA from Rickettsia bellii (strain OSU 85-389).